The primary structure comprises 132 residues: Small ribosomal subunit protein uS8 (132 aa).

The protein belongs to the universal ribosomal protein uS8 family. Part of the 30S ribosomal subunit. Contacts proteins S5 and S12.

One of the primary rRNA binding proteins, it binds directly to 16S rRNA central domain where it helps coordinate assembly of the platform of the 30S subunit. The sequence is that of Small ribosomal subunit protein uS8 from Syntrophobacter fumaroxidans (strain DSM 10017 / MPOB).